The primary structure comprises 480 residues: Glycogen synthase (480 aa).

Residue lysine 15 coordinates ADP-alpha-D-glucose.

It belongs to the glycosyltransferase 1 family. Bacterial/plant glycogen synthase subfamily.

It catalyses the reaction [(1-&gt;4)-alpha-D-glucosyl](n) + ADP-alpha-D-glucose = [(1-&gt;4)-alpha-D-glucosyl](n+1) + ADP + H(+). It participates in glycan biosynthesis; glycogen biosynthesis. Functionally, synthesizes alpha-1,4-glucan chains using ADP-glucose. This Rhizobium tropici protein is Glycogen synthase.